The sequence spans 192 residues: MADILLLDNIDSFTYNLVDQLRSSGHRVVIYRNHIAADNIIERLQQLEQPVLMLSPGPGTPAQAGCMPELLQRLQGQLPMIGICLGHQAIIEAYGGHVGQAGEILHGKASAIEHDGQGMFAGMPNPLPVARYHSLVGSNLPAELTVNARFGEMVMAVRHDAHRVCGYQFHPESILTTHGARLLEQTLAWALA.

One can recognise a Glutamine amidotransferase type-1 domain in the interval 3 to 192 (DILLLDNIDS…LEQTLAWALA (190 aa)). Position 57–59 (57–59 (GPG)) interacts with L-glutamine. The Nucleophile; for GATase activity role is filled by Cys-84. L-glutamine contacts are provided by residues Gln-88 and 134–135 (SL). Residues His-170 and Glu-172 each act as for GATase activity in the active site.

Heterotetramer consisting of two non-identical subunits: a beta subunit (TrpG) and a large alpha subunit (TrpE).

The catalysed reaction is chorismate + L-glutamine = anthranilate + pyruvate + L-glutamate + H(+). It participates in amino-acid biosynthesis; L-tryptophan biosynthesis; L-tryptophan from chorismate: step 1/5. In terms of biological role, part of a heterotetrameric complex that catalyzes the two-step biosynthesis of anthranilate, an intermediate in the biosynthesis of L-tryptophan. In the first step, the glutamine-binding beta subunit (TrpG) of anthranilate synthase (AS) provides the glutamine amidotransferase activity which generates ammonia as a substrate that, along with chorismate, is used in the second step, catalyzed by the large alpha subunit of AS (TrpE) to produce anthranilate. In the absence of TrpG, TrpE can synthesize anthranilate directly from chorismate and high concentrations of ammonia. This Yersinia pestis protein is Anthranilate synthase component 2 (trpG).